The primary structure comprises 215 residues: Cytidylate kinase (215 aa).

10-18 (GPAASGKGT) lines the ATP pocket.

It belongs to the cytidylate kinase family. Type 1 subfamily.

It localises to the cytoplasm. It carries out the reaction CMP + ATP = CDP + ADP. The catalysed reaction is dCMP + ATP = dCDP + ADP. The chain is Cytidylate kinase from Bartonella henselae (strain ATCC 49882 / DSM 28221 / CCUG 30454 / Houston 1) (Rochalimaea henselae).